The sequence spans 891 residues: DNA mismatch repair protein MutS (891 aa).

639-646 is an ATP binding site; that stretch reads GPNMAGKS. The segment at 827–854 is disordered; sequence TIQEARPSAQGSEEKTPSSPAEKGLSLF.

Belongs to the DNA mismatch repair MutS family.

This protein is involved in the repair of mismatches in DNA. It is possible that it carries out the mismatch recognition step. This protein has a weak ATPase activity. The protein is DNA mismatch repair protein MutS of Treponema denticola (strain ATCC 35405 / DSM 14222 / CIP 103919 / JCM 8153 / KCTC 15104).